The chain runs to 59 residues: Single-pass membrane and coiled-coil domain-containing protein 4 (59 aa).

A disordered region spans residues 1–23 (MRQLKGKPKKETSKDKKERKQAM). The span at 9–22 (KKETSKDKKERKQA) shows a compositional bias: basic and acidic residues. A coiled-coil region spans residues 9–31 (KKETSKDKKERKQAMQEARQQIT). The helical transmembrane segment at 32–52 (TVVLPTLAVVVALIVVFVYVA) threads the bilayer.

The protein belongs to the SMCO4 family.

It localises to the membrane. This chain is Single-pass membrane and coiled-coil domain-containing protein 4 (smco4), found in Xenopus laevis (African clawed frog).